We begin with the raw amino-acid sequence, 282 residues long: Acetyl-coenzyme A carboxylase carboxyl transferase subunit beta (282 aa).

The CoA carboxyltransferase N-terminal domain maps to 29 to 282; the sequence is LMQRCPNCGL…LLKYGGMQDD (254 aa). Residues cysteine 33, cysteine 36, cysteine 51, and cysteine 54 each contribute to the Zn(2+) site. Residues 33 to 54 form a C4-type zinc finger; it reads CPNCGLEFFARRLDKYKTCPDC.

This sequence belongs to the AccD/PCCB family. In terms of assembly, acetyl-CoA carboxylase is a heterohexamer composed of biotin carboxyl carrier protein (AccB), biotin carboxylase (AccC) and two subunits each of ACCase subunit alpha (AccA) and ACCase subunit beta (AccD). The cofactor is Zn(2+).

It localises to the cytoplasm. The catalysed reaction is N(6)-carboxybiotinyl-L-lysyl-[protein] + acetyl-CoA = N(6)-biotinyl-L-lysyl-[protein] + malonyl-CoA. Its pathway is lipid metabolism; malonyl-CoA biosynthesis; malonyl-CoA from acetyl-CoA: step 1/1. In terms of biological role, component of the acetyl coenzyme A carboxylase (ACC) complex. Biotin carboxylase (BC) catalyzes the carboxylation of biotin on its carrier protein (BCCP) and then the CO(2) group is transferred by the transcarboxylase to acetyl-CoA to form malonyl-CoA. This Lactobacillus delbrueckii subsp. bulgaricus (strain ATCC BAA-365 / Lb-18) protein is Acetyl-coenzyme A carboxylase carboxyl transferase subunit beta.